The sequence spans 295 residues: ATP synthase gamma chain (295 aa).

The protein belongs to the ATPase gamma chain family. F-type ATPases have 2 components, CF(1) - the catalytic core - and CF(0) - the membrane proton channel. CF(1) has five subunits: alpha(3), beta(3), gamma(1), delta(1), epsilon(1). CF(0) has three main subunits: a, b and c.

The protein resides in the cell inner membrane. Its function is as follows. Produces ATP from ADP in the presence of a proton gradient across the membrane. The gamma chain is believed to be important in regulating ATPase activity and the flow of protons through the CF(0) complex. In Campylobacter concisus (strain 13826), this protein is ATP synthase gamma chain.